The chain runs to 686 residues: Gamma-aminobutyric acid receptor alpha-like (686 aa).

Residues 1–58 form the signal peptide; that stretch reads MCTMPATRDASGSGDASTDLIAARSLSSHQGQRSNLRIFKLLISCCLLMLCIYPNAWP. The Extracellular segment spans residues 97 to 393; it reads SSWLTQSNNH…NFHLQRHMGN (297 aa). An N-linked (GlcNAc...) asparagine glycan is attached at asparagine 108. Cysteine 233 and cysteine 247 are disulfide-bonded. The N-linked (GlcNAc...) asparagine glycan is linked to asparagine 292. Helical transmembrane passes span 394–414, 424–441, and 456–476; these read FLIQ…VSFW, VSLG…GLEA, and FFVF…AVVH. The Cytoplasmic segment spans residues 477–650; the sequence is YYTKYGSGEC…YNSVSKIDRA (174 aa). Residues 570 to 641 form a disordered region; it reads KPPRADSDED…RRKGKRTPQY (72 aa). A compositionally biased stretch (polar residues) spans 586–596; that stretch reads QLRANEAPTTS. Low complexity predominate over residues 597 to 609; the sequence is AAAAAAQAAAQAA. A helical membrane pass occupies residues 651 to 671; that stretch reads SRIVFPLLFILINVFYWYGYL.

It belongs to the ligand-gated ion channel (TC 1.A.9) family. Gamma-aminobutyric acid receptor (TC 1.A.9.5) subfamily. In terms of assembly, generally pentameric. There are five types of GABA(A) receptor chains: alpha, beta, gamma, delta, and rho. Interacts with Lcch3 (beta chain).

It is found in the postsynaptic cell membrane. The protein localises to the cell membrane. Functionally, GABA, an inhibitory neurotransmitter, mediates neuronal inhibition by binding to the GABA receptor and opening an integral chloride channel. May combine with the ligand-gated ion channel subunit Lcch3 to form cation-selective GABA-gated ion channels. This Drosophila melanogaster (Fruit fly) protein is Gamma-aminobutyric acid receptor alpha-like (Grd).